The chain runs to 112 residues: Iron-sulfur cluster insertion protein ErpA (112 aa).

3 residues coordinate iron-sulfur cluster: C40, C104, and C106.

Belongs to the HesB/IscA family. In terms of assembly, homodimer. Iron-sulfur cluster serves as cofactor.

Required for insertion of 4Fe-4S clusters for at least IspG. The chain is Iron-sulfur cluster insertion protein ErpA from Pseudoalteromonas translucida (strain TAC 125).